A 442-amino-acid chain; its full sequence is Trigger factor (442 aa).

The region spanning 165–250 is the PPIase FKBP-type domain; the sequence is DDRVIIDFEG…LQKVMAPELP (86 aa).

Belongs to the FKBP-type PPIase family. Tig subfamily.

It localises to the cytoplasm. It catalyses the reaction [protein]-peptidylproline (omega=180) = [protein]-peptidylproline (omega=0). Involved in protein export. Acts as a chaperone by maintaining the newly synthesized protein in an open conformation. Functions as a peptidyl-prolyl cis-trans isomerase. In Coxiella burnetii (strain CbuG_Q212) (Coxiella burnetii (strain Q212)), this protein is Trigger factor.